Consider the following 387-residue polypeptide: Phosphoglycerate kinase (387 aa).

Substrate is bound by residues 21-23 (DLN), Arg36, 59-62 (HLGR), Arg113, and Arg146. ATP is bound by residues Lys197, Glu314, and 340–343 (GGDT).

The protein belongs to the phosphoglycerate kinase family. In terms of assembly, monomer.

It localises to the cytoplasm. It catalyses the reaction (2R)-3-phosphoglycerate + ATP = (2R)-3-phospho-glyceroyl phosphate + ADP. Its pathway is carbohydrate degradation; glycolysis; pyruvate from D-glyceraldehyde 3-phosphate: step 2/5. This is Phosphoglycerate kinase from Marinomonas sp. (strain MWYL1).